A 269-amino-acid chain; its full sequence is Bis(5'-nucleosyl)-tetraphosphatase, symmetrical (269 aa).

It belongs to the Ap4A hydrolase family.

It carries out the reaction P(1),P(4)-bis(5'-adenosyl) tetraphosphate + H2O = 2 ADP + 2 H(+). In terms of biological role, hydrolyzes diadenosine 5',5'''-P1,P4-tetraphosphate to yield ADP. In Vibrio vulnificus (strain CMCP6), this protein is Bis(5'-nucleosyl)-tetraphosphatase, symmetrical.